A 276-amino-acid chain; its full sequence is Phosphonates import ATP-binding protein PhnC (276 aa).

An ABC transporter domain is found at 2 to 246 (LEIHNLQKSY…VLTRIYGAED (245 aa)). Residue 35-42 (GPSGAGKS) participates in ATP binding.

It belongs to the ABC transporter superfamily. Phosphonates importer (TC 3.A.1.9.1) family. In terms of assembly, the complex is composed of two ATP-binding proteins (PhnC), two transmembrane proteins (PhnE) and a solute-binding protein (PhnD).

The protein localises to the cell inner membrane. It catalyses the reaction phosphonate(out) + ATP + H2O = phosphonate(in) + ADP + phosphate + H(+). Functionally, part of the ABC transporter complex PhnCDE involved in phosphonates import. Responsible for energy coupling to the transport system. This Alcaligenes faecalis protein is Phosphonates import ATP-binding protein PhnC.